A 227-amino-acid chain; its full sequence is Thymidylate kinase (227 aa).

Residue 7–14 (GIEGSGKT) coordinates ATP.

This sequence belongs to the thymidylate kinase family.

It catalyses the reaction dTMP + ATP = dTDP + ADP. Functionally, phosphorylation of dTMP to form dTDP in both de novo and salvage pathways of dTTP synthesis. The protein is Thymidylate kinase of Desulforapulum autotrophicum (strain ATCC 43914 / DSM 3382 / VKM B-1955 / HRM2) (Desulfobacterium autotrophicum).